The chain runs to 790 residues: Cadherin-6 (790 aa).

Positions 1–18 (MRTYRYFLLLFWVGQPYP) are cleaved as a signal peptide. The propeptide occupies 19–53 (TLSTPLSKRTSGFPAKKRALELSGNSKNELNRSKR). The N-linked (GlcNAc...) asparagine glycan is linked to Asn-49. Cadherin domains follow at residues 54 to 159 (SWMW…EPIF), 160 to 268 (TKEV…PPRF), 269 to 383 (PQST…PPVF), 384 to 486 (SKLA…DNAP), and 487 to 608 (EFAE…LIHP). Residues 54-615 (SWMWNQFFLL…IHPTGLSTGA (562 aa)) are Extracellular-facing. Asn-255 is a glycosylation site (N-linked (GlcNAc...) asparagine). Positions 259-288 (TDVNDNPPRFPQSTYQFKTPESSPPGTPIG) are disordered. A compositionally biased stretch (polar residues) spans 269–279 (PQSTYQFKTPE). N-linked (GlcNAc...) asparagine glycosylation is found at Asn-399, Asn-437, Asn-455, and Asn-536. The chain crosses the membrane as a helical span at residues 616 to 636 (LVAILLCIVILLVTVVLFAAL). Residues 637–790 (RRQRKKEPLI…YGGVDSDKDS (154 aa)) are Cytoplasmic-facing. 2 positions are modified to phosphoserine: Ser-786 and Ser-790.

As to expression, highly expressed in brain, cerebellum, and kidney. Lung, pancreas, and gastric mucosa show a weak expression. Also expressed in certain liver and kidney carcinomas.

Its subcellular location is the cell membrane. Its function is as follows. Cadherins are calcium-dependent cell adhesion proteins. They preferentially interact with themselves in a homophilic manner in connecting cells; cadherins may thus contribute to the sorting of heterogeneous cell types. The protein is Cadherin-6 (CDH6) of Homo sapiens (Human).